A 319-amino-acid chain; its full sequence is RWD domain-containing protein 2B (319 aa).

The RWD domain occupies 41–165 (SELDLLASMF…EWVREHASGY (125 aa)). S275 carries the phosphoserine modification.

In Pongo abelii (Sumatran orangutan), this protein is RWD domain-containing protein 2B (RWDD2B).